A 365-amino-acid chain; its full sequence is MPAHSFRIAAIPGDGIGLEVLPEGIRVLEAAALKHGLALEFDTFEWASCDYYLQHGKMMPDDWAEQLKQYDAIYFGAVDWPDKVPDHISLWGSLLKFRREFDQYVNIRPVRLFPGVPCALANRKVGDIDFVVVRENTEGEYSSLGGIMFENTENEIVIQESIFTRRGVDRILKYAFDLAEKRERKHVTSATKSNGMAISMPYWDKRTEAMAAHYPHVSWDKQHIDILCARFVLQPERFDVVVVASNLFGDILSDLGPACAGTIGIAPSANLNPERNFPSLFEPVHGSAPDIFGKNIANPIAMIWSGALMLEFLGQGDERYQRAHDDMLNAIERVIADGSVTPDMGGTLSTQQVGAAISDTLARLD.

Residues Asp-225, Asp-250, and Asp-254 each coordinate Mn(2+).

The protein belongs to the isocitrate and isopropylmalate dehydrogenases family. As to quaternary structure, homodimer. Mg(2+) is required as a cofactor. The cofactor is Mn(2+). Requires K(+) as cofactor.

The protein localises to the cytoplasm. It carries out the reaction tartrate + NAD(+) = 2-hydroxy-3-oxosuccinate + NADH + H(+). The enzyme catalyses (2R,3S)-tartrate + NAD(+) = 2-hydroxy-3-oxosuccinate + NADH + H(+). The catalysed reaction is (2R,3R)-tartrate + NAD(+) = 2-hydroxy-3-oxosuccinate + NADH + H(+). It catalyses the reaction (2R,3R)-tartrate + H(+) = (R)-glycerate + CO2. It carries out the reaction (R)-malate + NAD(+) = pyruvate + CO2 + NADH. The protein operates within carbohydrate acid metabolism; tartrate degradation; 2-hydroxy-3-oxosuccinate from L-tartrate: step 1/1. It participates in carbohydrate acid metabolism; tartrate degradation; 2-hydroxy-3-oxosuccinate from meso-tartrate: step 1/1. It functions in the pathway carbohydrate acid metabolism; tartrate degradation; D-glycerate from L-tartrate: step 1/1. Has multiple catalytic activities. Apart from catalyzing the oxidation of (+)-tartrate to oxaloglycolate, also converts meso-tartrate to D-glycerate and catalyzes the oxidative decarboxylation of D-malate to pyruvate. The polypeptide is Tartrate dehydrogenase/decarboxylase (Pseudomonas putida (Arthrobacter siderocapsulatus)).